An 89-amino-acid polypeptide reads, in one-letter code: Large ribosomal subunit protein eL37A (89 aa).

Zn(2+) contacts are provided by Cys19, Cys22, Cys34, and Cys37. A C4-type zinc finger spans residues Cys19–Cys37.

The protein belongs to the eukaryotic ribosomal protein eL37 family. As to quaternary structure, component of the large ribosomal subunit (LSU). Mature yeast ribosomes consist of a small (40S) and a large (60S) subunit. The 40S small subunit contains 1 molecule of ribosomal RNA (18S rRNA) and at least 33 different proteins. The large 60S subunit contains 3 rRNA molecules (25S, 5.8S and 5S rRNA) and at least 46 different proteins. Zn(2+) serves as cofactor.

The protein resides in the cytoplasm. In terms of biological role, component of the ribosome, a large ribonucleoprotein complex responsible for the synthesis of proteins in the cell. The small ribosomal subunit (SSU) binds messenger RNAs (mRNAs) and translates the encoded message by selecting cognate aminoacyl-transfer RNA (tRNA) molecules. The large subunit (LSU) contains the ribosomal catalytic site termed the peptidyl transferase center (PTC), which catalyzes the formation of peptide bonds, thereby polymerizing the amino acids delivered by tRNAs into a polypeptide chain. The nascent polypeptides leave the ribosome through a tunnel in the LSU and interact with protein factors that function in enzymatic processing, targeting, and the membrane insertion of nascent chains at the exit of the ribosomal tunnel. This Schizosaccharomyces pombe (strain 972 / ATCC 24843) (Fission yeast) protein is Large ribosomal subunit protein eL37A (rpl3703).